We begin with the raw amino-acid sequence, 712 residues long: Protein TAPT1 homolog (712 aa).

Low complexity predominate over residues 1–21 (MNNVPSTSRENSRNPSESSSS). Disordered stretches follow at residues 1–22 (MNNV…SSSI) and 44–66 (ITMS…EIET). 7 helical membrane-spanning segments follow: residues 196 to 216 (FFYL…GALL), 222 to 242 (TSAE…SMLI), 305 to 325 (TCGH…LVIL), 379 to 399 (HIFA…NWNI), 402 to 422 (FTEM…VDWL), 470 to 490 (GFIP…TFTL), and 497 to 517 (IIFG…GVVM). Positions 596–619 (EIRRSTDRETAVSHLTARSDERTP) are enriched in basic and acidic residues. A disordered region spans residues 596–712 (EIRRSTDRET…MPEQGVQRIE (117 aa)). Residues 656–667 (TENNTNSNSEQA) show a composition bias toward polar residues. Residues 675-692 (TAAPVTSSASTNTNATSS) show a composition bias toward low complexity.

Belongs to the TAPT1 family.

The protein localises to the membrane. In Caenorhabditis elegans, this protein is Protein TAPT1 homolog.